The sequence spans 154 residues: 6,7-dimethyl-8-ribityllumazine synthase (154 aa).

Residues Phe22, 56–58 (AFE), and 80–82 (AVI) each bind 5-amino-6-(D-ribitylamino)uracil. 85 to 86 (ST) serves as a coordination point for (2S)-2-hydroxy-3-oxobutyl phosphate. His88 serves as the catalytic Proton donor. Phe113 contributes to the 5-amino-6-(D-ribitylamino)uracil binding site. A (2S)-2-hydroxy-3-oxobutyl phosphate-binding site is contributed by Arg127.

Belongs to the DMRL synthase family.

It carries out the reaction (2S)-2-hydroxy-3-oxobutyl phosphate + 5-amino-6-(D-ribitylamino)uracil = 6,7-dimethyl-8-(1-D-ribityl)lumazine + phosphate + 2 H2O + H(+). Its pathway is cofactor biosynthesis; riboflavin biosynthesis; riboflavin from 2-hydroxy-3-oxobutyl phosphate and 5-amino-6-(D-ribitylamino)uracil: step 1/2. Catalyzes the formation of 6,7-dimethyl-8-ribityllumazine by condensation of 5-amino-6-(D-ribitylamino)uracil with 3,4-dihydroxy-2-butanone 4-phosphate. This is the penultimate step in the biosynthesis of riboflavin. The chain is 6,7-dimethyl-8-ribityllumazine synthase from Clostridium kluyveri (strain NBRC 12016).